Reading from the N-terminus, the 384-residue chain is tRNA-specific 2-thiouridylase MnmA (384 aa).

Residues 9-16 (GMSGGVDS) and methionine 35 each bind ATP. The interval 95–97 (NPD) is interaction with target base in tRNA. Cysteine 100 functions as the Nucleophile in the catalytic mechanism. Cysteine 100 and cysteine 196 form a disulfide bridge. Glycine 124 contacts ATP. Residues 146-148 (KDQ) form an interaction with tRNA region. The Cysteine persulfide intermediate role is filled by cysteine 196. The segment at 308–309 (RY) is interaction with tRNA.

It belongs to the MnmA/TRMU family.

Its subcellular location is the cytoplasm. It catalyses the reaction S-sulfanyl-L-cysteinyl-[protein] + uridine(34) in tRNA + AH2 + ATP = 2-thiouridine(34) in tRNA + L-cysteinyl-[protein] + A + AMP + diphosphate + H(+). Its function is as follows. Catalyzes the 2-thiolation of uridine at the wobble position (U34) of tRNA, leading to the formation of s(2)U34. The protein is tRNA-specific 2-thiouridylase MnmA of Burkholderia vietnamiensis (strain G4 / LMG 22486) (Burkholderia cepacia (strain R1808)).